The sequence spans 130 residues: uncharacterized protein (130 aa).

A disordered region spans residues 1–100; sequence MSSNSDNTEC…AEPDAAKEEP (100 aa). Basic and acidic residues-rich tracts occupy residues 57 to 75 and 91 to 100; these read YTTR…KMMD and AEPDAAKEEP.

This is an uncharacterized protein from Equine herpesvirus 1 (strain Ab4p) (EHV-1).